A 405-amino-acid polypeptide reads, in one-letter code: Nodal homolog 2-A (405 aa).

A signal peptide spans 1–18; that stretch reads MASLGVILFFVIASLIHG. A propeptide spanning residues 19–282 is cleaved from the precursor; sequence KPIHSERKAA…RVTDTRRPRR (264 aa). N71, N172, and N343 each carry an N-linked (GlcNAc...) asparagine glycan. Disulfide bonds link C305–C371, C334–C402, and C338–C404.

It belongs to the TGF-beta family. As to quaternary structure, homodimer; disulfide-linked. Forms heterodimers with the TGF-beta family member derriere. Interacts with tsku; enhances nodal2 activity. First localized to the vegetal region of the blastula. Just prior to gastrulation (stage 10), this expression disappears and instead becomes localized to the dorsal marginal zone, with enrichment in the organizer.

It localises to the secreted. Its function is as follows. Cooperation and regulatory loops of multiple nodals are essential for mesendoderm patterning in early embryos. Essential for mesoderm formation and axial patterning during embryonic development. Activates the activin-like signaling pathway to induce dorsal and ventral mesoderm in animal cap ectoderm. In addition, also dorsalizes ventral marginal zone (VMZ) tissues during gastrulation. Induces muscle actin. Appears to act as both a short-range and long-range morphogen. The unprocessed protein inhibits bmp- and wnt-signaling. In Xenopus laevis (African clawed frog), this protein is Nodal homolog 2-A (nodal2-a).